Consider the following 474-residue polypeptide: Ribulose bisphosphate carboxylase large chain (474 aa).

An N6,N6,N6-trimethyllysine modification is found at Lys-13. Substrate contacts are provided by Asn-122 and Thr-172. The active-site Proton acceptor is the Lys-174. Lys-176 is a substrate binding site. Residues Lys-200, Asp-202, and Glu-203 each coordinate Mg(2+). An N6-carboxylysine modification is found at Lys-200. His-293 acts as the Proton acceptor in catalysis. 3 residues coordinate substrate: Arg-294, His-326, and Ser-378.

The protein belongs to the RuBisCO large chain family. Type I subfamily. In terms of assembly, heterohexadecamer of 8 large chains and 8 small chains; disulfide-linked. The disulfide link is formed within the large subunit homodimers. It depends on Mg(2+) as a cofactor. Post-translationally, the disulfide bond which can form in the large chain dimeric partners within the hexadecamer appears to be associated with oxidative stress and protein turnover.

The protein localises to the plastid. Its subcellular location is the chloroplast. The enzyme catalyses 2 (2R)-3-phosphoglycerate + 2 H(+) = D-ribulose 1,5-bisphosphate + CO2 + H2O. It catalyses the reaction D-ribulose 1,5-bisphosphate + O2 = 2-phosphoglycolate + (2R)-3-phosphoglycerate + 2 H(+). RuBisCO catalyzes two reactions: the carboxylation of D-ribulose 1,5-bisphosphate, the primary event in carbon dioxide fixation, as well as the oxidative fragmentation of the pentose substrate in the photorespiration process. Both reactions occur simultaneously and in competition at the same active site. This chain is Ribulose bisphosphate carboxylase large chain, found in Dendrophthora clavata (Columbian mistletoe).